The chain runs to 371 residues: Queuine tRNA-ribosyltransferase (371 aa).

The active-site Proton acceptor is aspartate 90. Substrate is bound by residues 90–94 (DSGGF), aspartate 144, glutamine 188, and glycine 215. Residues 246-252 (GVGTPED) are RNA binding. Aspartate 265 (nucleophile) is an active-site residue. The tract at residues 270 to 274 (TRNAR) is RNA binding; important for wobble base 34 recognition. Positions 303, 305, 308, and 334 each coordinate Zn(2+).

It belongs to the queuine tRNA-ribosyltransferase family. In terms of assembly, homodimer. Within each dimer, one monomer is responsible for RNA recognition and catalysis, while the other monomer binds to the replacement base PreQ1. It depends on Zn(2+) as a cofactor.

It carries out the reaction 7-aminomethyl-7-carbaguanine + guanosine(34) in tRNA = 7-aminomethyl-7-carbaguanosine(34) in tRNA + guanine. Its pathway is tRNA modification; tRNA-queuosine biosynthesis. Functionally, catalyzes the base-exchange of a guanine (G) residue with the queuine precursor 7-aminomethyl-7-deazaguanine (PreQ1) at position 34 (anticodon wobble position) in tRNAs with GU(N) anticodons (tRNA-Asp, -Asn, -His and -Tyr). Catalysis occurs through a double-displacement mechanism. The nucleophile active site attacks the C1' of nucleotide 34 to detach the guanine base from the RNA, forming a covalent enzyme-RNA intermediate. The proton acceptor active site deprotonates the incoming PreQ1, allowing a nucleophilic attack on the C1' of the ribose to form the product. After dissociation, two additional enzymatic reactions on the tRNA convert PreQ1 to queuine (Q), resulting in the hypermodified nucleoside queuosine (7-(((4,5-cis-dihydroxy-2-cyclopenten-1-yl)amino)methyl)-7-deazaguanosine). This chain is Queuine tRNA-ribosyltransferase, found in Neisseria meningitidis serogroup C (strain 053442).